Here is a 162-residue protein sequence, read N- to C-terminus: Phosphopantetheine adenylyltransferase (162 aa).

Residue S9 coordinates substrate. ATP-binding positions include 9 to 10 (SF) and H17. Substrate-binding residues include K41, L73, and K87. ATP is bound by residues 88–90 (GLR), E98, and 123–129 (CSFLSSS).

The protein belongs to the bacterial CoaD family. Homohexamer. Mg(2+) serves as cofactor.

The protein resides in the cytoplasm. The catalysed reaction is (R)-4'-phosphopantetheine + ATP + H(+) = 3'-dephospho-CoA + diphosphate. It functions in the pathway cofactor biosynthesis; coenzyme A biosynthesis; CoA from (R)-pantothenate: step 4/5. Reversibly transfers an adenylyl group from ATP to 4'-phosphopantetheine, yielding dephospho-CoA (dPCoA) and pyrophosphate. The sequence is that of Phosphopantetheine adenylyltransferase from Natranaerobius thermophilus (strain ATCC BAA-1301 / DSM 18059 / JW/NM-WN-LF).